The sequence spans 90 residues: Probable Fe(2+)-trafficking protein (90 aa).

It belongs to the Fe(2+)-trafficking protein family.

In terms of biological role, could be a mediator in iron transactions between iron acquisition and iron-requiring processes, such as synthesis and/or repair of Fe-S clusters in biosynthetic enzymes. The chain is Probable Fe(2+)-trafficking protein from Vibrio campbellii (strain ATCC BAA-1116).